A 738-amino-acid chain; its full sequence is MEKSRMNLPKGPDTLCFDKDEFMKEDFDVDHFVSDCRKRVQLEELRDDLELYYKLLKTAMVELINKDYADFVNLSTNLVGMDKALNQLSVPLGQLREEVLSLRSSVSEGIRAVDERMSKQEDIRKKKMCVLRLIQVIRSVEKIEKILNSQSSKETSALEASSPLLTGQILERIATEFNQLQFHAVQSKGMPLLDKVRPRIAGITAMLQQSLEGLLLEGLQTSDVDIIRHCLRTYATIDKTRDAEALVGQVLVKPYIDEVIIEQFVESHPNGLQVMYNKLLEFVPHHCRLLREVTGGAISSEKGNTVPGYDFLVNSVWPQIVQGLEEKLPSLFNPGNPDAFHEKYTISMDFVRRLERQCGSQASVKRLRAHPAYHSFNKKWNLPVYFQIRFREIAGSLEAALTDVLEDAPAESPYCLLASHRTWSSLRRCWSDEMFLPLLVHRLWRLTLQILARYSVFVNELSLRPISNESPKEIKKPLVTGSKEPSITQGNTEDQGSGPSETKPVVSISRTQLVYVVADLDKLQEQLPELLEIIKPKLEMIGFKNFSSISAALEDSQSSFSACVPSLSSKIIQDLSDSCFGFLKSALEVPRLYRRTNKEVPTTASSYVDSALKPLFQLQSGHKDKLKQAIIQQWLEGTLSESTHKYYETVSDVLNSVKKMEESLKRLKQARKTTPANPVGPSGGMSDDDKIRLQLALDVEYLGEQIQKLGLQASDIKSFSALAELVAAAKDQATAEQP.

Disordered stretches follow at residues 474 to 504 (IKKP…ETKP) and 668 to 687 (KQAR…GMSD). Residues 483 to 500 (KEPSITQGNTEDQGSGPS) show a composition bias toward polar residues.

Belongs to the COG2 family. In terms of assembly, component of the conserved oligomeric Golgi complex which is composed of eight different subunits and is required for normal Golgi morphology and localization.

Its subcellular location is the golgi apparatus membrane. Functionally, required for normal Golgi morphology and function. In Homo sapiens (Human), this protein is Conserved oligomeric Golgi complex subunit 2 (COG2).